The primary structure comprises 225 residues: Cytidylate kinase (225 aa).

11-19 (GPAGAGKGT) is a binding site for ATP. Over residues 169 to 185 (MDRIKSRIEERDARDQS) the composition is skewed to basic and acidic residues. A disordered region spans residues 169-195 (MDRIKSRIEERDARDQSRATAPLAAAP).

This sequence belongs to the cytidylate kinase family. Type 1 subfamily.

The protein localises to the cytoplasm. It catalyses the reaction CMP + ATP = CDP + ADP. The enzyme catalyses dCMP + ATP = dCDP + ADP. The polypeptide is Cytidylate kinase (Magnetococcus marinus (strain ATCC BAA-1437 / JCM 17883 / MC-1)).